A 105-amino-acid polypeptide reads, in one-letter code: MSIRPLYDKVVVKRIEAQRTTASGIVIPDTASEKPEQGEVIATGNGRRLQDGTQVPLEVKVGDQVLFGKYAGQTVKLHGEELLVLREEDILGVVEASDAKLKKVA.

Belongs to the GroES chaperonin family. As to quaternary structure, heptamer of 7 subunits arranged in a ring. Interacts with the chaperonin GroEL.

It localises to the cytoplasm. In terms of biological role, together with the chaperonin GroEL, plays an essential role in assisting protein folding. The GroEL-GroES system forms a nano-cage that allows encapsulation of the non-native substrate proteins and provides a physical environment optimized to promote and accelerate protein folding. GroES binds to the apical surface of the GroEL ring, thereby capping the opening of the GroEL channel. The chain is Co-chaperonin GroES from Methylovorus sp. (strain SS1 / DSM 11726).